A 452-amino-acid polypeptide reads, in one-letter code: Lipase member H (452 aa).

Residues 1 to 16 form the signal peptide; that stretch reads MLRFYLFISLLCLVRS. N-linked (GlcNAc...) asparagine glycans are attached at residues asparagine 50, asparagine 66, and asparagine 122. The active-site Nucleophile is the serine 154. The Charge relay system role is filled by aspartate 178. The cysteines at positions 233 and 247 are disulfide-linked. Histidine 249 (charge relay system) is an active-site residue. N-linked (GlcNAc...) asparagine glycosylation occurs at asparagine 263. Cystine bridges form between cysteine 271-cysteine 282, cysteine 285-cysteine 293, and cysteine 428-cysteine 447.

The protein belongs to the AB hydrolase superfamily. Lipase family. As to quaternary structure, interacts with TTMP/C3orf52. In terms of tissue distribution, expressed in liver and lacrimal gland.

The protein resides in the secreted. It localises to the cell membrane. It carries out the reaction 1-hexadecanoyl-2-(9Z-octadecenoyl)-sn-glycero-3-phosphate + H2O = 2-(9Z-octadecenoyl)-sn-glycero-3-phosphate + hexadecanoate + H(+). Its function is as follows. Hydrolyzes specifically phosphatidic acid (PA) to produce 2-acyl lysophosphatidic acid (LPA; a potent bioactive lipid mediator) and fatty acid. Does not hydrolyze other phospholipids, like phosphatidylserine (PS), phosphatidylcholine (PC) and phosphatidylethanolamine (PE) or triacylglycerol (TG). This is Lipase member H (LIPH) from Oryctolagus cuniculus (Rabbit).